We begin with the raw amino-acid sequence, 294 residues long: Protein farnesyltransferase/geranylgeranyltransferase type-1 subunit alpha (294 aa).

PFTA repeat units follow at residues 57-91 (YSLRALNLTGFLIMNNPAHYTVWAYRFQILNHTPS), 92-125 (YIDNELEWLDEIAEDFQKNYQVWHHRQKILSLTK), 126-160 (NYERELEFTKKMFEIDSKNYHVWSYRVWILQNFND), 161-194 (YSQELKLTNELLEKDIYNNSAWNHRFYVLFETSK), and 199-233 (SLEEELNYLKDKILFAPDNQSAWNYLCGVLDKSGP).

The protein belongs to the protein prenyltransferase subunit alpha family. As to quaternary structure, heterodimer of an alpha(cwp1) and a beta(cpp1 or cwg2) subunit. The cofactor is Mg(2+).

It catalyses the reaction L-cysteinyl-[protein] + (2E,6E)-farnesyl diphosphate = S-(2E,6E)-farnesyl-L-cysteinyl-[protein] + diphosphate. It carries out the reaction geranylgeranyl diphosphate + L-cysteinyl-[protein] = S-geranylgeranyl-L-cysteinyl-[protein] + diphosphate. Its function is as follows. Catalyzes the transfer of a farnesyl or geranyl-geranyl moiety from farnesyl or geranyl-geranyl diphosphate to a cysteine at the fourth position from the C-terminus of several proteins having the C-terminal sequence Cys-aliphatic-aliphatic-X. The alpha(cwp1) subunit is thought to participate in a stable complex with the substrate. The beta(cpp1 or cwg2) subunits bind the peptide substrate. The sequence is that of Protein farnesyltransferase/geranylgeranyltransferase type-1 subunit alpha (cwp1) from Schizosaccharomyces pombe (strain 972 / ATCC 24843) (Fission yeast).